We begin with the raw amino-acid sequence, 678 residues long: Glycine--tRNA ligase beta subunit (678 aa).

Belongs to the class-II aminoacyl-tRNA synthetase family. As to quaternary structure, tetramer of two alpha and two beta subunits.

It localises to the cytoplasm. The catalysed reaction is tRNA(Gly) + glycine + ATP = glycyl-tRNA(Gly) + AMP + diphosphate. The chain is Glycine--tRNA ligase beta subunit from Streptococcus pneumoniae (strain P1031).